The chain runs to 255 residues: Acetyl-coenzyme A carboxylase carboxyl transferase subunit alpha (255 aa).

In terms of domain architecture, CoA carboxyltransferase C-terminal spans 1–235; that stretch reads MNIAKIVREA…KKELQTELAR (235 aa).

Belongs to the AccA family. In terms of assembly, acetyl-CoA carboxylase is a heterohexamer composed of biotin carboxyl carrier protein (AccB), biotin carboxylase (AccC) and two subunits each of ACCase subunit alpha (AccA) and ACCase subunit beta (AccD).

Its subcellular location is the cytoplasm. The catalysed reaction is N(6)-carboxybiotinyl-L-lysyl-[protein] + acetyl-CoA = N(6)-biotinyl-L-lysyl-[protein] + malonyl-CoA. It participates in lipid metabolism; malonyl-CoA biosynthesis; malonyl-CoA from acetyl-CoA: step 1/1. Functionally, component of the acetyl coenzyme A carboxylase (ACC) complex. First, biotin carboxylase catalyzes the carboxylation of biotin on its carrier protein (BCCP) and then the CO(2) group is transferred by the carboxyltransferase to acetyl-CoA to form malonyl-CoA. The polypeptide is Acetyl-coenzyme A carboxylase carboxyl transferase subunit alpha (Streptococcus pneumoniae (strain CGSP14)).